Here is a 445-residue protein sequence, read N- to C-terminus: Glutamate-1-semialdehyde 2,1-aminomutase (445 aa).

N6-(pyridoxal phosphate)lysine is present on lysine 263.

It belongs to the class-III pyridoxal-phosphate-dependent aminotransferase family. HemL subfamily. It depends on pyridoxal 5'-phosphate as a cofactor.

It is found in the cytoplasm. The enzyme catalyses (S)-4-amino-5-oxopentanoate = 5-aminolevulinate. It participates in porphyrin-containing compound metabolism; protoporphyrin-IX biosynthesis; 5-aminolevulinate from L-glutamyl-tRNA(Glu): step 2/2. The chain is Glutamate-1-semialdehyde 2,1-aminomutase from Halorubrum lacusprofundi (strain ATCC 49239 / DSM 5036 / JCM 8891 / ACAM 34).